Reading from the N-terminus, the 118-residue chain is Large ribosomal subunit protein bL20 (118 aa).

Belongs to the bacterial ribosomal protein bL20 family.

Functionally, binds directly to 23S ribosomal RNA and is necessary for the in vitro assembly process of the 50S ribosomal subunit. It is not involved in the protein synthesizing functions of that subunit. The polypeptide is Large ribosomal subunit protein bL20 (Azotobacter vinelandii).